The primary structure comprises 558 residues: EF-hand and coiled-coil domain-containing protein 1 (558 aa).

An EF-hand domain is found at 43–78 (GLDQYLQEVFHHLDCRGAGRLPRADFRALCAVLGLN). Residues 161–170 (LRRPRRRRRP) are compositionally biased toward basic residues. Disordered stretches follow at residues 161–183 (LRRP…YGER) and 304–395 (RSEG…QPSG). 2 coiled-coil regions span residues 179 to 304 (AYGE…RGYR) and 453 to 495 (VEAE…LNIS).

In Mus musculus (Mouse), this protein is EF-hand and coiled-coil domain-containing protein 1 (Efcc1).